The primary structure comprises 475 residues: Ribulose bisphosphate carboxylase large chain (475 aa).

Positions 1–2 (MS) are excised as a propeptide. Residue proline 3 is modified to N-acetylproline. Position 14 is an N6,N6,N6-trimethyllysine (lysine 14). Substrate is bound by residues asparagine 123 and threonine 173. The active-site Proton acceptor is lysine 175. Position 177 (lysine 177) interacts with substrate. Mg(2+) is bound by residues lysine 201, aspartate 203, and glutamate 204. Lysine 201 carries the N6-carboxylysine modification. The active-site Proton acceptor is histidine 294. Substrate is bound by residues arginine 295, histidine 327, and serine 379.

The protein belongs to the RuBisCO large chain family. Type I subfamily. Heterohexadecamer of 8 large chains and 8 small chains. Mg(2+) is required as a cofactor.

Its subcellular location is the plastid. The protein resides in the chloroplast. It carries out the reaction 2 (2R)-3-phosphoglycerate + 2 H(+) = D-ribulose 1,5-bisphosphate + CO2 + H2O. The catalysed reaction is D-ribulose 1,5-bisphosphate + O2 = 2-phosphoglycolate + (2R)-3-phosphoglycerate + 2 H(+). Functionally, ruBisCO catalyzes two reactions: the carboxylation of D-ribulose 1,5-bisphosphate, the primary event in carbon dioxide fixation, as well as the oxidative fragmentation of the pentose substrate in the photorespiration process. Both reactions occur simultaneously and in competition at the same active site. The chain is Ribulose bisphosphate carboxylase large chain from Huperzia lucidula (Shining clubmoss).